The sequence spans 320 residues: tRNA (guanosine(34)-2'-O)-methyltransferase (320 aa).

5 residues coordinate S-adenosyl-L-methionine: G53, W55, D81, D97, and D122. K162 acts as the Proton acceptor in catalysis.

The protein belongs to the class I-like SAM-binding methyltransferase superfamily. RNA methyltransferase RlmE family. TRM7 subfamily. As to quaternary structure, interacts with CG33172/WDR6.

Its subcellular location is the cytoplasm. The enzyme catalyses cytidine(32)/guanosine(34) in tRNA + 2 S-adenosyl-L-methionine = 2'-O-methylcytidine(32)/2'-O-methylguanosine(34) in tRNA + 2 S-adenosyl-L-homocysteine + 2 H(+). Methylates the 2'-O-ribose of nucleotides at position 34 of the tRNA anticodon loop of substrate tRNAs. May require WDR6 for methylation of the nucleotide at position 34 of the anticodon loop of substrate tRNAs. Plays a role in neurogenesis. Requisite for RNA-mediated gene silencing. Modifies position 34 in tRNA(Leu(CAA)), tRNA(Leu(CAG)), tRNA(Phe(GAA)), and tRNA(Trp(CCA)). The chain is tRNA (guanosine(34)-2'-O)-methyltransferase from Drosophila melanogaster (Fruit fly).